The chain runs to 168 residues: Large ribosomal subunit protein uL10 (168 aa).

It belongs to the universal ribosomal protein uL10 family. As to quaternary structure, part of the ribosomal stalk of the 50S ribosomal subunit. The N-terminus interacts with L11 and the large rRNA to form the base of the stalk. The C-terminus forms an elongated spine to which L12 dimers bind in a sequential fashion forming a multimeric L10(L12)X complex.

In terms of biological role, forms part of the ribosomal stalk, playing a central role in the interaction of the ribosome with GTP-bound translation factors. The chain is Large ribosomal subunit protein uL10 from Laribacter hongkongensis (strain HLHK9).